Consider the following 86-residue polypeptide: MMLDLVKYPVIRTEKTTRLVENNQLSFDVDVRITKPQIRKIIEEFFNVKVLAVNTHRPPRKTNRLGSKPSYKRVIVTVDSDVTLLK.

Belongs to the universal ribosomal protein uL23 family. In terms of assembly, part of the 50S ribosomal subunit.

The protein resides in the plastid. Its subcellular location is the chloroplast. Binds to 23S rRNA. The polypeptide is Large ribosomal subunit protein uL23c (rpl23) (Chlorella vulgaris (Green alga)).